Here is a 182-residue protein sequence, read N- to C-terminus: Large ribosomal subunit protein uL5 (182 aa).

It belongs to the universal ribosomal protein uL5 family. Part of the 50S ribosomal subunit; part of the 5S rRNA/L5/L18/L25 subcomplex. Contacts the 5S rRNA and the P site tRNA. Forms a bridge to the 30S subunit in the 70S ribosome.

In terms of biological role, this is one of the proteins that bind and probably mediate the attachment of the 5S RNA into the large ribosomal subunit, where it forms part of the central protuberance. In the 70S ribosome it contacts protein S13 of the 30S subunit (bridge B1b), connecting the 2 subunits; this bridge is implicated in subunit movement. Contacts the P site tRNA; the 5S rRNA and some of its associated proteins might help stabilize positioning of ribosome-bound tRNAs. The protein is Large ribosomal subunit protein uL5 of Borrelia garinii subsp. bavariensis (strain ATCC BAA-2496 / DSM 23469 / PBi) (Borreliella bavariensis).